Consider the following 153-residue polypeptide: Pheromone-binding protein Gp-9 (153 aa).

The first 19 residues, Met1 to Ala19, serve as a signal peptide directing secretion. Cystine bridges form between Cys37–Cys77, Cys73–Cys129, and Cys118–Cys138.

Belongs to the PBP/GOBP family. In terms of assembly, homodimer.

The protein resides in the secreted. Functionally, colony queen number, a major feature of social organization, is associated with worker genotype for Gp-9. Colonies are headed by either a single reproductive queen (monogyne form) or multiple queens (polygyne form). Differences in worker Gp-9 genotypes between social forms may cause differences in workers' abilities to recognize queens and regulate their numbers. This Solenopsis geminata (Tropical fire ant) protein is Pheromone-binding protein Gp-9.